Consider the following 318-residue polypeptide: MILLQSHSRFLLQTLLTRAQNLDKAVELDYQWIEFDDVRYHVQVTMKNPNLLLLSVSLPNPPPEAMSFDGLPLGAIEAIKTTYGTGFQILDPPRDGFSLTLKLNFSKVRPDEELLTKLASIREVVMGAPLKIIFKHLASRTVAPELDRLVAIMHRPNETFFLVPQADKVTVAFPMRFKDSVDTILATSFLKEFVEARRAAALNTAPSCSWSPTAPQELEGAPKETLSANAGFVTFVIFPRHVEGKKLDRTVWNLSTFHAYVSYHVKFSEGFMHTRMRRRVESMIQALDQAKPLEKTRSMNNKSFKRLGLNEVNHTNSK.

Positions 297 to 318 (RSMNNKSFKRLGLNEVNHTNSK) are disordered.

This sequence belongs to the ARPC2 family. As to quaternary structure, component of the Arp2/3 complex composed of ARP2, ARP3, ARPC1/p41-ARC, ARPC2/p34-ARC, ARPC3/p21-ARC, ARPC4/p20-ARC and ARPC5/p16-ARC. Interacts with ARPC4. In terms of tissue distribution, expressed at low levels in all tissues with a relatively highest expression in inflorescences.

Its subcellular location is the cytoplasm. It is found in the cytoskeleton. The protein localises to the cell projection. Functions as actin-binding component of the Arp2/3 complex which is involved in regulation of actin polymerization and together with an activating nucleation-promoting factor (NPF) mediates the formation of branched actin networks. Seems to contact the mother actin filament. Arp2/3 complex plays a critical role in the control of cell morphogenesis via the modulation of cell polarity development. This chain is Actin-related protein 2/3 complex subunit 2A (ARPC2A), found in Arabidopsis thaliana (Mouse-ear cress).